Consider the following 230-residue polypeptide: MTQKHGKNYVAAVAKVEAEKAYALNDAVSLVKEIDFAKFDASVEVVFKLNVDTRQADQQLRGAVVLPNGTGKDKTVVVFAQGDKAKEAEAAGADVVGAADLVQRIQGGWLDFDVAVATPDMMAQVGRVGRALGPKGLMPNPKTGTVTMDVTKAVSDAKGGQVTYRTDRDGNVAVPVGRVSFEEGKLAENIKSIAETVLKARPAAVKGTYVQHVSISSTFGPAVTLDINTL.

The protein belongs to the universal ribosomal protein uL1 family. Part of the 50S ribosomal subunit.

Binds directly to 23S rRNA. The L1 stalk is quite mobile in the ribosome, and is involved in E site tRNA release. Its function is as follows. Protein L1 is also a translational repressor protein, it controls the translation of the L11 operon by binding to its mRNA. This is Large ribosomal subunit protein uL1 from Leuconostoc mesenteroides subsp. mesenteroides (strain ATCC 8293 / DSM 20343 / BCRC 11652 / CCM 1803 / JCM 6124 / NCDO 523 / NBRC 100496 / NCIMB 8023 / NCTC 12954 / NRRL B-1118 / 37Y).